Reading from the N-terminus, the 138-residue chain is Acidic phospholipase A2 1 (138 aa).

Residues 1–16 form the signal peptide; sequence MRTLWIMAVLLVGVEG. 7 disulfides stabilise this stretch: C42-C131, C44-C60, C59-C111, C65-C138, C66-C104, C73-C97, and C91-C102. The Ca(2+) site is built by F43, G45, and G47. Residue H63 is part of the active site. A Ca(2+)-binding site is contributed by D64. Residue D105 is part of the active site.

This sequence belongs to the phospholipase A2 family. Group II subfamily. D49 sub-subfamily. Requires Ca(2+) as cofactor. In terms of tissue distribution, expressed by the venom gland.

It localises to the secreted. It catalyses the reaction a 1,2-diacyl-sn-glycero-3-phosphocholine + H2O = a 1-acyl-sn-glycero-3-phosphocholine + a fatty acid + H(+). Functionally, snake venom phospholipase A2 (PLA2) that has high lipolytic activity. PLA2 catalyzes the calcium-dependent hydrolysis of the 2-acyl groups in 3-sn-phosphoglycerides. The polypeptide is Acidic phospholipase A2 1 (Craspedocephalus gramineus (Bamboo pit viper)).